The sequence spans 511 residues: Arginine-containing cyclodipeptide synthase eshA (511 aa).

The Conserved DDXXE motif motif lies at 413–417; that stretch reads DDSAE.

Belongs to the arginine-containing cyclodipeptide synthase family.

The enzyme catalyses L-arginyl-tRNA(Arg) + L-leucyl-tRNA(Leu) = cyclo(L-arginyl-L-leucyl) + tRNA(Arg) + tRNA(Leu) + 2 H(+). The protein operates within secondary metabolite biosynthesis. Its function is as follows. Arginine-containing cyclodipeptide synthase; part of the cluster that mediates the biosynthesis of a highly modified cyclo-arginine-leucine dipeptide (cRW). Within the pathway, eshA acts as the scaffold-generating enzyme and is responsible for formation of the cyclo-Arg-Leu diketopiperazine (cRL) from L-arginyl-tRNA(Arg) + L-Leucyl-tRNA(Leu). Additional enzymes from the cluster then further modify the cyclo-Arg-Leu diketopiperazine (cRW) scaffold. The sequence is that of Arginine-containing cyclodipeptide synthase eshA from Penicillium shearii (Eupenicillium shearii).